We begin with the raw amino-acid sequence, 81 residues long: Elongation factor 1-beta (81 aa).

The protein belongs to the EF-1-beta/EF-1-delta family.

Promotes the exchange of GDP for GTP in EF-1-alpha/GDP, thus allowing the regeneration of EF-1-alpha/GTP that could then be used to form the ternary complex EF-1-alpha/GTP/AAtRNA. This is Elongation factor 1-beta from Nanoarchaeum equitans (strain Kin4-M).